Here is a 542-residue protein sequence, read N- to C-terminus: Heterogeneous nuclear ribonucleoprotein L-like (542 aa).

The disordered stretch occupies residues 1–71; that stretch reads MSSSSSSPRE…QPEAGGSHHK (71 aa). A compositionally biased stretch (basic and acidic residues) spans 18-29; the sequence is YESQAKRLKTEE. Residue lysine 26 forms a Glycyl lysine isopeptide (Lys-Gly) (interchain with G-Cter in SUMO2) linkage. Serine 35 is modified (phosphoserine). Threonine 46 is modified (phosphothreonine). Residues 48–58 are compositionally biased toward gly residues; the sequence is RGGGDGGGGGR. Residues serine 59, serine 68, and serine 75 each carry the phosphoserine modification. RRM domains lie at 76-150, 166-244, and 335-409; these read PVVH…YSTS, NKVL…YARP, and SVVM…VSKQ. Lysine 491 participates in a covalent cross-link: Glycyl lysine isopeptide (Lys-Gly) (interchain with G-Cter in SUMO2).

As to quaternary structure, interacts with HNRNPL. In terms of tissue distribution, widely expressed. Detected in bone marrow stroma cells, skeletal muscle, heart, placenta, pancreas, kidney and lung.

In terms of biological role, RNA-binding protein that functions as a regulator of alternative splicing for multiple target mRNAs, including PTPRC/CD45 and STAT5A. Required for alternative splicing of PTPRC. In Homo sapiens (Human), this protein is Heterogeneous nuclear ribonucleoprotein L-like (HNRNPLL).